The sequence spans 594 residues: DNA mismatch repair protein MutL (594 aa).

This sequence belongs to the DNA mismatch repair MutL/HexB family.

Its function is as follows. This protein is involved in the repair of mismatches in DNA. It is required for dam-dependent methyl-directed DNA mismatch repair. May act as a 'molecular matchmaker', a protein that promotes the formation of a stable complex between two or more DNA-binding proteins in an ATP-dependent manner without itself being part of a final effector complex. The polypeptide is DNA mismatch repair protein MutL (Tolumonas auensis (strain DSM 9187 / NBRC 110442 / TA 4)).